A 512-amino-acid chain; its full sequence is GMP synthase [glutamine-hydrolyzing] (512 aa).

One can recognise a Glutamine amidotransferase type-1 domain in the interval G5–N195. C82 (nucleophile) is an active-site residue. Active-site residues include H169 and E171. One can recognise a GMPS ATP-PPase domain in the interval W196–R387. Residue S223–S229 coordinates ATP.

As to quaternary structure, homodimer.

The enzyme catalyses XMP + L-glutamine + ATP + H2O = GMP + L-glutamate + AMP + diphosphate + 2 H(+). It functions in the pathway purine metabolism; GMP biosynthesis; GMP from XMP (L-Gln route): step 1/1. Functionally, catalyzes the synthesis of GMP from XMP. This is GMP synthase [glutamine-hydrolyzing] from Fusobacterium nucleatum subsp. nucleatum (strain ATCC 25586 / DSM 15643 / BCRC 10681 / CIP 101130 / JCM 8532 / KCTC 2640 / LMG 13131 / VPI 4355).